The chain runs to 1828 residues: Protein TIC 214 (1828 aa).

The next 6 membrane-spanning stretches (helical) occupy residues 18–38, 64–84, 87–107, 124–144, 172–192, and 222–242; these read IINS…FSIG, FITG…HLAM, PYTI…WKNH, FSIQ…HFVL, VGWL…LFWI, and VNIF…SPIL. A compositionally biased stretch (basic and acidic residues) spans 270 to 279; that stretch reads SEAKETKQEQ. Disordered regions lie at residues 270–301, 618–637, 741–763, and 1533–1571; these read SEAK…PNKL, DLQQ…HAIR, EFKT…EDKK, and KEEF…RQSK. Residues 1550-1562 show a composition bias toward basic and acidic residues; that stretch reads KDVEKDYAKSDIK.

Belongs to the TIC214 family. In terms of assembly, part of the Tic complex.

The protein resides in the plastid. It localises to the chloroplast inner membrane. Involved in protein precursor import into chloroplasts. May be part of an intermediate translocation complex acting as a protein-conducting channel at the inner envelope. This chain is Protein TIC 214, found in Calycanthus floridus var. glaucus (Eastern sweetshrub).